We begin with the raw amino-acid sequence, 197 residues long: Zinc finger protein 581 (197 aa).

Over residues 1–10 (MLVLPSPCPQ) the composition is skewed to pro residues. Positions 1–52 (MLVLPSPCPQPLAFSSVETMEGPPRRTCRSPEPGPSSSIGSPQASSPPRPNH) are disordered. The segment covering 35 to 44 (PSSSIGSPQA) has biased composition (low complexity). C2H2-type zinc fingers lie at residues 87–109 (YSCP…SITH), 115–137 (FECD…HSIH), 145–167 (HGCP…SRVH), and 173–196 (FQCP…RWKH).

The protein resides in the nucleus. Its function is as follows. May be involved in transcriptional regulation. The polypeptide is Zinc finger protein 581 (ZNF581) (Homo sapiens (Human)).